The chain runs to 204 residues: NADH-ubiquinone oxidoreductase chain 6 (204 aa).

Helical transmembrane passes span 5–25 (IFLF…VIGL), 29–49 (VHSV…LLLL), 56–76 (FMLI…VVMM), 91–111 (LWPI…SSFY), and 151–171 (LLFL…IVLT).

The protein belongs to the complex I subunit 6 family.

The protein resides in the mitochondrion membrane. The catalysed reaction is a ubiquinone + NADH + 5 H(+)(in) = a ubiquinol + NAD(+) + 4 H(+)(out). Functionally, core subunit of the mitochondrial membrane respiratory chain NADH dehydrogenase (Complex I) that is believed to belong to the minimal assembly required for catalysis. Complex I functions in the transfer of electrons from NADH to the respiratory chain. The immediate electron acceptor for the enzyme is believed to be ubiquinone. The protein is NADH-ubiquinone oxidoreductase chain 6 (ND6) of Chondrus crispus (Carrageen Irish moss).